We begin with the raw amino-acid sequence, 884 residues long: Alanine--tRNA ligase (884 aa).

Histidine 574, histidine 578, cysteine 675, and histidine 679 together coordinate Zn(2+).

This sequence belongs to the class-II aminoacyl-tRNA synthetase family. Zn(2+) serves as cofactor.

Its subcellular location is the cytoplasm. The enzyme catalyses tRNA(Ala) + L-alanine + ATP = L-alanyl-tRNA(Ala) + AMP + diphosphate. Functionally, catalyzes the attachment of alanine to tRNA(Ala) in a two-step reaction: alanine is first activated by ATP to form Ala-AMP and then transferred to the acceptor end of tRNA(Ala). Also edits incorrectly charged Ser-tRNA(Ala) and Gly-tRNA(Ala) via its editing domain. In Ralstonia nicotianae (strain ATCC BAA-1114 / GMI1000) (Ralstonia solanacearum), this protein is Alanine--tRNA ligase.